The sequence spans 349 residues: UDP-3-O-acylglucosamine N-acyltransferase (349 aa).

His-242 acts as the Proton acceptor in catalysis.

The protein belongs to the transferase hexapeptide repeat family. LpxD subfamily. In terms of assembly, homotrimer.

It catalyses the reaction a UDP-3-O-[(3R)-3-hydroxyacyl]-alpha-D-glucosamine + a (3R)-hydroxyacyl-[ACP] = a UDP-2-N,3-O-bis[(3R)-3-hydroxyacyl]-alpha-D-glucosamine + holo-[ACP] + H(+). Its pathway is bacterial outer membrane biogenesis; LPS lipid A biosynthesis. Functionally, catalyzes the N-acylation of UDP-3-O-acylglucosamine using 3-hydroxyacyl-ACP as the acyl donor. Is involved in the biosynthesis of lipid A, a phosphorylated glycolipid that anchors the lipopolysaccharide to the outer membrane of the cell. The polypeptide is UDP-3-O-acylglucosamine N-acyltransferase (Cytophaga hutchinsonii (strain ATCC 33406 / DSM 1761 / CIP 103989 / NBRC 15051 / NCIMB 9469 / D465)).